Reading from the N-terminus, the 240-residue chain is Uridylate kinase (240 aa).

15 to 18 (KLSG) provides a ligand contact to ATP. The interval 23–28 (GSEGFG) is involved in allosteric activation by GTP. Gly-57 is a UMP binding site. 2 residues coordinate ATP: Gly-58 and Arg-62. UMP is bound by residues Asp-77 and 138–145 (TGNPFFTT). The ATP site is built by Thr-165, Tyr-171, and Asp-174.

This sequence belongs to the UMP kinase family. In terms of assembly, homohexamer.

The protein localises to the cytoplasm. The enzyme catalyses UMP + ATP = UDP + ADP. It participates in pyrimidine metabolism; CTP biosynthesis via de novo pathway; UDP from UMP (UMPK route): step 1/1. With respect to regulation, allosterically activated by GTP. Inhibited by UTP. Its function is as follows. Catalyzes the reversible phosphorylation of UMP to UDP. This is Uridylate kinase from Photobacterium profundum (strain SS9).